The sequence spans 686 residues: Probable ferric reductase transmembrane component (686 aa).

The next 7 helical transmembrane spans lie at 23–43 (LSGW…VPVV), 79–99 (TLWL…VGSA), 111–131 (VAAA…PLPY), 147–167 (VVVL…ATSG), 178–198 (WMGA…LPAV), 205–225 (TFYY…HVHS), and 256–276 (VTVV…ADLV). One can recognise a Ferric oxidoreductase domain in the interval 108 to 666 (LGRVAAAFMP…LAAGPQALVE (559 aa)). 308–314 (HPFTVAS) contacts FAD. Residues 392–412 (LMVVGGSAISFGLPFLRILNF) traverse the membrane as a helical segment. 431 to 439 (ILSQFRSNF) contacts NAD(+). Residues Asn506 and Asn644 are each glycosylated (N-linked (GlcNAc...) asparagine).

FAD is required as a cofactor.

It is found in the membrane. The catalysed reaction is 2 a Fe(II)-siderophore + NAD(+) + H(+) = 2 a Fe(III)-siderophore + NADH. Its function is as follows. Is required for the uptake of Fe(3+) ions. May participate in the transport of electrons from cytoplasm to an extracellular substrate (Fe(3+) ion) via FAD and heme intermediates. Involved in iron homeostasis. In Eremothecium gossypii (strain ATCC 10895 / CBS 109.51 / FGSC 9923 / NRRL Y-1056) (Yeast), this protein is Probable ferric reductase transmembrane component (FRE8).